A 398-amino-acid polypeptide reads, in one-letter code: Succinate--CoA ligase [ADP-forming] subunit beta (398 aa).

An ATP-grasp domain is found at 9–253; it reads KQVLAKYGVA…ESEEDPAELE (245 aa). Residues Lys-46, 53–55, Glu-108, Cys-111, and Glu-116 each bind ATP; that span reads GRG. Mg(2+) contacts are provided by Asn-208 and Asp-222. Substrate contacts are provided by residues Asn-273 and 330–332; that span reads GIM.

The protein belongs to the succinate/malate CoA ligase beta subunit family. In terms of assembly, heterotetramer of two alpha and two beta subunits. Mg(2+) is required as a cofactor.

The enzyme catalyses succinate + ATP + CoA = succinyl-CoA + ADP + phosphate. The catalysed reaction is GTP + succinate + CoA = succinyl-CoA + GDP + phosphate. It participates in carbohydrate metabolism; tricarboxylic acid cycle; succinate from succinyl-CoA (ligase route): step 1/1. In terms of biological role, succinyl-CoA synthetase functions in the citric acid cycle (TCA), coupling the hydrolysis of succinyl-CoA to the synthesis of either ATP or GTP and thus represents the only step of substrate-level phosphorylation in the TCA. The beta subunit provides nucleotide specificity of the enzyme and binds the substrate succinate, while the binding sites for coenzyme A and phosphate are found in the alpha subunit. The sequence is that of Succinate--CoA ligase [ADP-forming] subunit beta from Paramagnetospirillum magneticum (strain ATCC 700264 / AMB-1) (Magnetospirillum magneticum).